The following is a 209-amino-acid chain: Large ribosomal subunit protein uL4 (209 aa).

Residues 45 to 80 (RQGTHKAKERSELSGSTRKLIRQKGSGGARRGDINS) form a disordered region.

It belongs to the universal ribosomal protein uL4 family. In terms of assembly, part of the 50S ribosomal subunit.

In terms of biological role, one of the primary rRNA binding proteins, this protein initially binds near the 5'-end of the 23S rRNA. It is important during the early stages of 50S assembly. It makes multiple contacts with different domains of the 23S rRNA in the assembled 50S subunit and ribosome. Functionally, forms part of the polypeptide exit tunnel. The sequence is that of Large ribosomal subunit protein uL4 from Porphyromonas gingivalis (strain ATCC BAA-308 / W83).